The primary structure comprises 1055 residues: Type I restriction enzyme HindI endonuclease subunit (1055 aa).

Positions 287 to 468 constitute a Helicase ATP-binding domain; sequence TSEKGDRRIG…QDVFGRYVSI (182 aa).

It belongs to the HsdR family. In terms of assembly, the type I restriction/modification system is composed of three polypeptides R, M and S; the restriction enzyme has stoichiometry R(2)M(2)S(1) while the methyltransferase is M(2)S(1).

It catalyses the reaction Endonucleolytic cleavage of DNA to give random double-stranded fragments with terminal 5'-phosphates, ATP is simultaneously hydrolyzed.. In terms of biological role, the restriction (R) subunit of a type I restriction enzyme that recognizes 5'-RAACN(5)TAG-3' and cleaves a random distance away. Subunit R is required for both nuclease and ATPase activities, but not for modification. After locating a non-methylated recognition site, the enzyme complex serves as a molecular motor that translocates DNA in an ATP-dependent manner until a collision occurs that triggers cleavage. In Haemophilus influenzae (strain ATCC 51907 / DSM 11121 / KW20 / Rd), this protein is Type I restriction enzyme HindI endonuclease subunit.